Consider the following 185-residue polypeptide: UPF0397 protein CPR_1556 (185 aa).

5 helical membrane passes run 11–31 (IVAI…GSLP), 44–64 (AFLS…IGFI), 71–91 (IVFF…VGLI), 111–131 (IFMF…LVAP), and 149–169 (GVIG…VLIS).

It belongs to the UPF0397 family.

It localises to the cell membrane. The polypeptide is UPF0397 protein CPR_1556 (Clostridium perfringens (strain SM101 / Type A)).